We begin with the raw amino-acid sequence, 459 residues long: Vacuolar amino acid transporter 5 (459 aa).

Helical transmembrane passes span 8–28, 33–53, 82–102, 131–151, 161–181, 206–226, 240–260, and 278–298; these read GVLT…PFAF, LMPG…GLLL, VVFD…YLII, FLDR…PLCF, ASMI…YHFV, LTTL…FSVI, IPIF…GTGY, and SIST…AFPL. Positions 335–351 are enriched in polar residues; it reads FNSEDPQEAPTQQNNEE. The disordered stretch occupies residues 335 to 354; it reads FNSEDPQEAPTQQNNEEPNL. Transmembrane regions (helical) follow at residues 364–384, 386–406, and 434–454; these read IITL…TSLA, VLAI…PGLF, and LSLF…IVFL.

Belongs to the amino acid/polyamine transporter 2 family.

The protein localises to the vacuole membrane. Probable amino acid transporter of unknown specificity. The polypeptide is Vacuolar amino acid transporter 5 (AVT5) (Saccharomyces cerevisiae (strain ATCC 204508 / S288c) (Baker's yeast)).